Here is a 224-residue protein sequence, read N- to C-terminus: Large ribosomal subunit protein uL4 (224 aa).

The interval N54–N73 is disordered.

It belongs to the universal ribosomal protein uL4 family. In terms of assembly, part of the 50S ribosomal subunit.

Functionally, one of the primary rRNA binding proteins, this protein initially binds near the 5'-end of the 23S rRNA. It is important during the early stages of 50S assembly. It makes multiple contacts with different domains of the 23S rRNA in the assembled 50S subunit and ribosome. Its function is as follows. Forms part of the polypeptide exit tunnel. The protein is Large ribosomal subunit protein uL4 of Chlamydia felis (strain Fe/C-56) (Chlamydophila felis).